Consider the following 163-residue polypeptide: Nucleotide-binding protein Npun_R4736 (163 aa).

The protein belongs to the YajQ family.

In terms of biological role, nucleotide-binding protein. The polypeptide is Nucleotide-binding protein Npun_R4736 (Nostoc punctiforme (strain ATCC 29133 / PCC 73102)).